The sequence spans 143 residues: FIS1-related protein fis-1 (143 aa).

A helical membrane pass occupies residues 121–141 (LGLLGGAVAVVGGLVIAGLAF).

Belongs to the FIS1 family.

The protein localises to the mitochondrion outer membrane. It is found in the peroxisome membrane. Involved in the fragmentation of the mitochondrial network. Involved in perinuclear clustering of the mitochondrial network. Plays a role in removal of ultraviolet C radiation-induced mitochondrial DNA damage. May act, redundantly with fis-2, downstream of mitochondrial fission, before the fission products participate in either mitochondrial homeostasis, mitophagy, or apoptosis. The sequence is that of FIS1-related protein fis-1 from Caenorhabditis elegans.